We begin with the raw amino-acid sequence, 640 residues long: Threonine--tRNA ligase (640 aa).

Residues 1 to 60 form the TGS domain; that stretch reads MKITFPDGAVKEFEPGVSTADIAASISPGLKKKALAGKLNGELLDLVTPIHEDGAIEIVT. Positions 241–538 are catalytic; the sequence is DHRKLGKELE…LIEEYKGAFP (298 aa). Residues Cys-334, His-385, and His-515 each contribute to the Zn(2+) site.

Belongs to the class-II aminoacyl-tRNA synthetase family. As to quaternary structure, homodimer. The cofactor is Zn(2+).

Its subcellular location is the cytoplasm. The enzyme catalyses tRNA(Thr) + L-threonine + ATP = L-threonyl-tRNA(Thr) + AMP + diphosphate + H(+). In terms of biological role, catalyzes the attachment of threonine to tRNA(Thr) in a two-step reaction: L-threonine is first activated by ATP to form Thr-AMP and then transferred to the acceptor end of tRNA(Thr). Also edits incorrectly charged L-seryl-tRNA(Thr). In Listeria welshimeri serovar 6b (strain ATCC 35897 / DSM 20650 / CCUG 15529 / CIP 8149 / NCTC 11857 / SLCC 5334 / V8), this protein is Threonine--tRNA ligase.